The primary structure comprises 333 residues: D-glutamate N-acetyltransferase (333 aa).

The protein belongs to the N-acetyltransferase DgcN family.

The catalysed reaction is D-glutamate + acetyl-CoA = N-acetyl-D-glutamate + CoA + H(+). The protein operates within amino-acid degradation. Functionally, N-acetyltransferase involved in a deamination-independent D-glutamate degradation pathway, named the DgcN-DgcA pathway. Catalyzes the transfer of the acetyl moiety from acetyl-CoA to D-glutamate to generate N-acetyl-D-glutamate. This is D-glutamate N-acetyltransferase from Tritonibacter scottomollicae (Epibacterium scottomollicae).